Here is a 124-residue protein sequence, read N- to C-terminus: Small ribosomal subunit protein uS12 (124 aa).

A 3-methylthioaspartic acid modification is found at Asp-89. Residues 104 to 124 (TAGVENRKQSRSKYGAKRPKK) are disordered. The segment covering 112–124 (QSRSKYGAKRPKK) has biased composition (basic residues).

Belongs to the universal ribosomal protein uS12 family. In terms of assembly, part of the 30S ribosomal subunit. Contacts proteins S8 and S17. May interact with IF1 in the 30S initiation complex.

With S4 and S5 plays an important role in translational accuracy. Functionally, interacts with and stabilizes bases of the 16S rRNA that are involved in tRNA selection in the A site and with the mRNA backbone. Located at the interface of the 30S and 50S subunits, it traverses the body of the 30S subunit contacting proteins on the other side and probably holding the rRNA structure together. The combined cluster of proteins S8, S12 and S17 appears to hold together the shoulder and platform of the 30S subunit. This Pseudothermotoga lettingae (strain ATCC BAA-301 / DSM 14385 / NBRC 107922 / TMO) (Thermotoga lettingae) protein is Small ribosomal subunit protein uS12.